Reading from the N-terminus, the 211-residue chain is tRNA (guanine-N(7)-)-methyltransferase (211 aa).

S-adenosyl-L-methionine-binding residues include Glu37, Asp62, Glu89, and Asp112. The active site involves Asp112. The substrate site is built by Lys116 and Asp148.

Belongs to the class I-like SAM-binding methyltransferase superfamily. TrmB family.

The enzyme catalyses guanosine(46) in tRNA + S-adenosyl-L-methionine = N(7)-methylguanosine(46) in tRNA + S-adenosyl-L-homocysteine. Its pathway is tRNA modification; N(7)-methylguanine-tRNA biosynthesis. Catalyzes the formation of N(7)-methylguanine at position 46 (m7G46) in tRNA. This chain is tRNA (guanine-N(7)-)-methyltransferase, found in Geobacter metallireducens (strain ATCC 53774 / DSM 7210 / GS-15).